The chain runs to 625 residues: tRNA uridine 5-carboxymethylaminomethyl modification enzyme MnmG (625 aa).

Residue 13–18 coordinates FAD; sequence GGGHAG. 273 to 287 is a binding site for NAD(+); the sequence is GPRYCPSIEDKVVRF.

The protein belongs to the MnmG family. Homodimer. Heterotetramer of two MnmE and two MnmG subunits. Requires FAD as cofactor.

The protein localises to the cytoplasm. Functionally, NAD-binding protein involved in the addition of a carboxymethylaminomethyl (cmnm) group at the wobble position (U34) of certain tRNAs, forming tRNA-cmnm(5)s(2)U34. The polypeptide is tRNA uridine 5-carboxymethylaminomethyl modification enzyme MnmG (Methylococcus capsulatus (strain ATCC 33009 / NCIMB 11132 / Bath)).